A 720-amino-acid polypeptide reads, in one-letter code: Polyribonucleotide nucleotidyltransferase (720 aa).

Mg(2+) is bound by residues D487 and D493. The region spanning 554–613 (PRIETFKIPTDKIREVIGTGGKVIREIVEKTGAKINIEDDGTVKVASNDGEAMKAAIKWI) is the KH domain. In terms of domain architecture, S1 motif spans 623–691 (GQIYEGTVVK…DRGKTRLSMK (69 aa)). The segment at 691–720 (KAVDQQTGEDLEAAGHKAEKADAPREAAGE) is disordered. Positions 703 to 720 (AAGHKAEKADAPREAAGE) are enriched in basic and acidic residues.

Belongs to the polyribonucleotide nucleotidyltransferase family. Mg(2+) serves as cofactor.

The protein localises to the cytoplasm. The enzyme catalyses RNA(n+1) + phosphate = RNA(n) + a ribonucleoside 5'-diphosphate. Its function is as follows. Involved in mRNA degradation. Catalyzes the phosphorolysis of single-stranded polyribonucleotides processively in the 3'- to 5'-direction. The chain is Polyribonucleotide nucleotidyltransferase from Nitrobacter hamburgensis (strain DSM 10229 / NCIMB 13809 / X14).